The primary structure comprises 450 residues: Phosphoglucosamine mutase (450 aa).

S102 acts as the Phosphoserine intermediate in catalysis. S102, D244, D246, and D248 together coordinate Mg(2+). A Phosphoserine modification is found at S102.

This sequence belongs to the phosphohexose mutase family. The cofactor is Mg(2+). Activated by phosphorylation.

The enzyme catalyses alpha-D-glucosamine 1-phosphate = D-glucosamine 6-phosphate. Catalyzes the conversion of glucosamine-6-phosphate to glucosamine-1-phosphate. This Bartonella bacilliformis (strain ATCC 35685 / KC583 / Herrer 020/F12,63) protein is Phosphoglucosamine mutase.